The following is a 297-amino-acid chain: Aspartate carbamoyltransferase catalytic subunit (297 aa).

Carbamoyl phosphate contacts are provided by Arg-51 and Thr-52. Residue Lys-79 coordinates L-aspartate. Carbamoyl phosphate-binding residues include Arg-101, His-130, and Gln-133. Residues Arg-163 and Arg-215 each coordinate L-aspartate. Carbamoyl phosphate is bound by residues Gly-256 and Pro-257.

The protein belongs to the aspartate/ornithine carbamoyltransferase superfamily. ATCase family. In terms of assembly, heterododecamer (2C3:3R2) of six catalytic PyrB chains organized as two trimers (C3), and six regulatory PyrI chains organized as three dimers (R2).

It catalyses the reaction carbamoyl phosphate + L-aspartate = N-carbamoyl-L-aspartate + phosphate + H(+). The protein operates within pyrimidine metabolism; UMP biosynthesis via de novo pathway; (S)-dihydroorotate from bicarbonate: step 2/3. Its function is as follows. Catalyzes the condensation of carbamoyl phosphate and aspartate to form carbamoyl aspartate and inorganic phosphate, the committed step in the de novo pyrimidine nucleotide biosynthesis pathway. The chain is Aspartate carbamoyltransferase catalytic subunit from Ehrlichia ruminantium (strain Gardel).